Reading from the N-terminus, the 226-residue chain is Ribose-5-phosphate isomerase A (226 aa).

Substrate-binding positions include 28-31, 80-83, and 93-96; these read TGST, DGAD, and KGGG. Glu-102 functions as the Proton acceptor in the catalytic mechanism. Lys-120 contributes to the substrate binding site.

It belongs to the ribose 5-phosphate isomerase family. In terms of assembly, homodimer.

The enzyme catalyses aldehydo-D-ribose 5-phosphate = D-ribulose 5-phosphate. It participates in carbohydrate degradation; pentose phosphate pathway; D-ribose 5-phosphate from D-ribulose 5-phosphate (non-oxidative stage): step 1/1. Catalyzes the reversible conversion of ribose-5-phosphate to ribulose 5-phosphate. This chain is Ribose-5-phosphate isomerase A, found in Caulobacter sp. (strain K31).